The chain runs to 130 residues: Glycine cleavage system H protein (130 aa).

One can recognise a Lipoyl-binding domain in the interval 25-106 (MALIGISDFA…PFDSWMIKVK (82 aa)). An N6-lipoyllysine modification is found at lysine 66.

It belongs to the GcvH family. The glycine cleavage system is composed of four proteins: P, T, L and H. (R)-lipoate is required as a cofactor.

In terms of biological role, the glycine cleavage system catalyzes the degradation of glycine. The H protein shuttles the methylamine group of glycine from the P protein to the T protein. The polypeptide is Glycine cleavage system H protein (Leptospira interrogans serogroup Icterohaemorrhagiae serovar copenhageni (strain Fiocruz L1-130)).